A 469-amino-acid polypeptide reads, in one-letter code: MPYALSDKHLKMVSGHLSETDPEVEQIIKDEVDRQKHSIDLIASENFTTTSVFDALGTPLCNKYSEGYPGARYYGGNEHIDRIERLCQQRALEAFHVTPDRWGVNVQTLSGSPANLQVYQALMKPHERLMGLYLPDGGHLSHGYATENRKISAVSTYFESFPYRVNPETGIIDYDTLEKNAILYRPKILVAGTSAYCRLIDYKRMREIADKCGAYLMVDMAHISGLVAAGVIPSPFEYADIVTTTTHKSLRGPRGAMIFFRRGIRSVNQKTGKEIPYDLENPINFSVFPGHQGGPHNHTIAALATALKQAATPEFKEYQTQVLKNAKALENEFQTLGYRLVSNGTDSHMVLVSLREKGVDGARVEYVCEKINIALNKNSIPGDKSALVPGGVRIGAPAMTTRGMGEEDFHRIVRYIDQAVKFAEQTQSSLPKEANKLKDFKAKVDEIADQLAPLKKEIYDWTAEYPLAV.

Position 248 is an N6-(pyridoxal phosphate)lysine (K248).

This sequence belongs to the SHMT family. As to quaternary structure, homotetramer. Requires pyridoxal 5'-phosphate as cofactor.

The protein resides in the cytoplasm. It carries out the reaction (6R)-5,10-methylene-5,6,7,8-tetrahydrofolate + glycine + H2O = (6S)-5,6,7,8-tetrahydrofolate + L-serine. The protein operates within one-carbon metabolism; tetrahydrofolate interconversion. In terms of biological role, interconversion of serine and glycine. The sequence is that of Serine hydroxymethyltransferase, cytosolic (SHM2) from Candida glabrata (strain ATCC 2001 / BCRC 20586 / JCM 3761 / NBRC 0622 / NRRL Y-65 / CBS 138) (Yeast).